The following is a 171-amino-acid chain: Peptide deformylase 1 (171 aa).

Fe cation-binding residues include Cys-99 and His-141. Glu-142 is a catalytic residue.

The protein belongs to the polypeptide deformylase family. The cofactor is Fe(2+).

The catalysed reaction is N-terminal N-formyl-L-methionyl-[peptide] + H2O = N-terminal L-methionyl-[peptide] + formate. In terms of biological role, removes the formyl group from the N-terminal Met of newly synthesized proteins. Requires at least a dipeptide for an efficient rate of reaction. N-terminal L-methionine is a prerequisite for activity but the enzyme has broad specificity at other positions. In Xanthomonas axonopodis pv. citri (strain 306), this protein is Peptide deformylase 1.